A 350-amino-acid polypeptide reads, in one-letter code: MRASQSPMLDPRARQLLRTLIARYIRDGEPVGSKTLAQHAGLDVSPATIRNILADLEDVGLLSSPHTSAGRVPTAHGYRVFVDSLVQMQPPGEEEVRRLRAELASGNGTQSLLGSASQMLSAMSHFVGVVSAPRREQFAFRHIDFVALDARRVLAILVFADNEVQNRVIEPRRAYEPAELERVANYLNAQFAGRALADIRACLLRELRMAKSEMEQLLAHSVDLASEALVPADAEDMVMAGQTRLMGVQDLSDLDRLRELFEAFASKREILQLLERTIQAPGVRIFIGEETGMVSLEDVSLVTAPYAANGQVLGVLGVIGPKRMAYDRLIPLVQTAADVLGAAMESPGTR.

It belongs to the HrcA family.

Its function is as follows. Negative regulator of class I heat shock genes (grpE-dnaK-dnaJ and groELS operons). Prevents heat-shock induction of these operons. The protein is Heat-inducible transcription repressor HrcA of Xanthomonas euvesicatoria pv. vesicatoria (strain 85-10) (Xanthomonas campestris pv. vesicatoria).